The chain runs to 66 residues: Movement protein TGBp3 (66 aa).

The Lumenal segment spans residues 1-2; it reads MD. The helical transmembrane segment at 3–23 threads the bilayer; that stretch reads FTTLIIIGVYLLVFIVYFAKI. Topologically, residues 24 to 66 are cytoplasmic; it reads NTSVCTISISGASIEISGCDNPTLFEILPKLRPFNHGLSLPSN.

The protein belongs to the Tymovirales TGBp3 protein family.

Its subcellular location is the host endoplasmic reticulum membrane. Its function is as follows. Plays a role in viral cell-to-cell propagation, by facilitating genome transport to neighboring plant cells through plasmosdesmata. May induce the formation of granular vesicles derived from the Endoplasmic reticulum, which align on actin filaments. This Trifolium (WCMV) protein is Movement protein TGBp3.